The primary structure comprises 789 residues: Ribosomal protein S6 kinase alpha-5 (789 aa).

In terms of domain architecture, Protein kinase 1 spans 39–308 (FELLKVLGTG…ADEIKQHPFF (270 aa)). Residues 45-53 (LGTGAYGKV) and Lys71 contribute to the ATP site. The active-site Proton acceptor is the Asp167. Ser202 bears the Phosphoserine; by autocatalysis mark. One can recognise an AGC-kinase C-terminal domain in the interval 309 to 377 (QNINWDDLAA…VAPSILFKRN (69 aa)). Phosphoserine is present on Ser350. Ser366 and Ser371 each carry phosphoserine; by autocatalysis. The 262-residue stretch at 416-677 (DLKEKPLGEG…MSSLRYNEWL (262 aa)) folds into the Protein kinase 2 domain. ATP-binding positions include 422–430 (LGEGSFSIC) and Lys445. The active-site Proton acceptor is Asp534. Residues Thr571 and Thr690 each carry the phosphothreonine modification. Residues 731–789 (AKRRKMKKTSTSTETRSSSSESSHSSSSHSHGKTTPTKTLQPTNPTDSNNPETIFQFSD) are disordered. The segment covering 739 to 769 (TSTSTETRSSSSESSHSSSSHSHGKTTPTKT) has biased composition (low complexity). 3 positions are modified to phosphoserine; by autocatalysis: Ser740, Ser742, and Ser748. A compositionally biased stretch (polar residues) spans 770–789 (LQPTNPTDSNNPETIFQFSD).

It belongs to the protein kinase superfamily. AGC Ser/Thr protein kinase family. S6 kinase subfamily. Requires Mg(2+) as cofactor. In terms of processing, ser-366 and Thr-571 phosphorylation is required for kinase activity. Ser-366 and Ser-202 are autophosphorylated by the C-terminal kinase domain, and their phosphorylation is essential for the catalytic activity of the N-terminal kinase domain. Phosphorylated at Ser-350, Thr-571 and Thr-690 by MAP kinases. Autophosphorylated at Ser-740, Ser-742 and Ser-748 by the N-terminal kinase domain. Widely expressed with high levels in heart, brain and placenta. Less abundant in lung, kidney and liver.

It localises to the nucleus. It carries out the reaction L-seryl-[protein] + ATP = O-phospho-L-seryl-[protein] + ADP + H(+). The enzyme catalyses L-threonyl-[protein] + ATP = O-phospho-L-threonyl-[protein] + ADP + H(+). Activated by phosphorylation at Ser-350, Thr-571 and Thr-690 by MAP kinases, and by further autophosphorylation of Ser-202, Ser-366 and Ser-371 by the activated C-terminal kinase domain. The active N-terminal kinase domain finally phosphorylates downstream substrates, as well as Ser-740, Ser-742 and Ser-748 in its own C-terminal region. Its function is as follows. Serine/threonine-protein kinase that is required for the mitogen or stress-induced phosphorylation of the transcription factors CREB1 and ATF1 and that contributes to gene activation by histone phosphorylation. Phosphorylates CREB1 and ATF1 in response to mitogenic or stress stimuli such as UV-C irradiation, epidermal growth factor (EGF) and anisomycin. Directly represses transcription via phosphorylation of 'Ser-1' of histone H2A. Phosphorylates 'Ser-10' of histone H3 in response to mitogenics, stress stimuli and EGF, which results in the transcriptional activation of several immediate early genes, including proto-oncogenes c-fos/FOS and c-jun/JUN. May also phosphorylate 'Ser-28' of histone H3. Mediates the mitogen- and stress-induced phosphorylation of high mobility group protein 1 (HMGN1/HMG14). In Gallus gallus (Chicken), this protein is Ribosomal protein S6 kinase alpha-5 (RPS6KA5).